A 971-amino-acid polypeptide reads, in one-letter code: Protein cwh43 (971 aa).

A PGAP2-like region spans residues 1–242; sequence MTEKTSSLVF…PSSFATRKKE (242 aa). A run of 19 helical transmembrane segments spans residues 15–35, 71–91, 101–121, 129–149, 161–181, 188–208, 286–306, 313–333, 336–356, 366–386, 397–417, 432–452, 467–487, 509–529, 532–552, 555–575, 588–608, 622–642, and 673–693; these read VALV…ALAL, VFQW…LLWF, VIIT…WVYV, WHDI…ILVS, IRNI…YWYI, IPGA…WDIL, VYLS…VWYF, ISGY…GIPL, KFAS…IAAY, FVTA…FSNI, ISTF…FFSN, QIPA…FHVQ, ITAL…HTFL, YPHG…APYL, SGAF…FMYI, GWCS…YSFA, VWGG…WVVA, TSYI…AYSG, and LLTG…NMPP. A PGAP2IP-like region spans residues 243 to 971; sequence KGEHLSYAEA…LVVHEPWYYD (729 aa). His-826 is an active-site residue.

It in the N-terminal section; belongs to the PGAP2 family. This sequence in the C-terminal section; belongs to the PGAP2IP family.

It is found in the cell membrane. The protein localises to the endoplasmic reticulum membrane. Its function is as follows. Involved in the maintenance of cell wall integrity. Required for the replacement of the diacylglycerol moiety by ceramides during GPI-anchor maturation. This chain is Protein cwh43 (cwh43), found in Schizosaccharomyces pombe (strain 972 / ATCC 24843) (Fission yeast).